Reading from the N-terminus, the 134-residue chain is Arsenate reductase 1 (134 aa).

Residues C11, C83, and C90 each act as nucleophile in the active site. Disulfide bonds link C11/C83 and C83/C90.

The protein belongs to the low molecular weight phosphotyrosine protein phosphatase family. Thioredoxin-coupled ArsC subfamily.

The protein resides in the cytoplasm. The enzyme catalyses arsenate + [thioredoxin]-dithiol + H(+) = arsenite + [thioredoxin]-disulfide + H2O. Functionally, catalyzes the reduction of arsenate [As(V)] to arsenite [As(III)]. The sequence is that of Arsenate reductase 1 from Bacillus cereus (strain ATCC 10987 / NRS 248).